The sequence spans 122 residues: Large ribosomal subunit protein uL14 (122 aa).

This sequence belongs to the universal ribosomal protein uL14 family. Part of the 50S ribosomal subunit. Forms a cluster with proteins L3 and L19. In the 70S ribosome, L14 and L19 interact and together make contacts with the 16S rRNA in bridges B5 and B8.

In terms of biological role, binds to 23S rRNA. Forms part of two intersubunit bridges in the 70S ribosome. In Dehalococcoides mccartyi (strain ATCC BAA-2266 / KCTC 15142 / 195) (Dehalococcoides ethenogenes (strain 195)), this protein is Large ribosomal subunit protein uL14.